The chain runs to 207 residues: Gene 66 protein (207 aa).

The protein is Gene 66 protein (66) of Mycobacterium (Mycobacteriophage L5).